Consider the following 84-residue polypeptide: Metallothionein-like protein 2C (84 aa).

Belongs to the metallothionein superfamily. Type 15 family.

The protein localises to the cytoplasm. The protein resides in the cytosol. Its function is as follows. Metallothioneins have a high content of cysteine residues that bind various heavy metals. Acts as a reactive oxygen species (ROS) scavenger in the cytosol. Possesses superoxide anion and hydroxyl radical scavenging activities in vitro. Plays a role during root development, lateral root initiation and seed embryo germination, possibly by regulating levels of cytokinin. This Oryza sativa subsp. indica (Rice) protein is Metallothionein-like protein 2C (MT2C).